The sequence spans 433 residues: Legumain (433 aa).

Residues 1-17 (MIWEFTVLLSLVLGTGA) form the signal peptide. A propeptide spanning residues 18–25 (VPLEDPED) is cleaved from the precursor. N-linked (GlcNAc...) asparagine glycosylation is present at Asn-91. The active site involves His-148. Asn-167 is a glycosylation site (N-linked (GlcNAc...) asparagine). Cys-189 (nucleophile) is an active-site residue. N-linked (GlcNAc...) asparagine glycans are attached at residues Asn-263 and Asn-272. Positions 324-433 (DLQESRRLVQ…SMNKVCHGYY (110 aa)) are excised as a propeptide. Intrachain disulfides connect Cys-378/Cys-412 and Cys-390/Cys-429.

Belongs to the peptidase C13 family. In terms of assembly, homodimer before autocatalytic removal of the propeptide. Monomer after autocatalytic processing. May interact with integrins. Activated by autocatalytic processing at pH 4. Detected in kidney (at protein level).

The protein resides in the lysosome. The enzyme catalyses Hydrolysis of proteins and small molecule substrates at -Asn-|-Xaa- bonds.. Its function is as follows. Has a strict specificity for hydrolysis of asparaginyl bonds. Can also cleave aspartyl bonds slowly, especially under acidic conditions. Involved in the processing of proteins for MHC class II antigen presentation in the lysosomal/endosomal system. Also involved in MHC class I antigen presentation in cross-presenting dendritic cells by mediating cleavage and maturation of Perforin-2 (MPEG1), thereby promoting antigen translocation in the cytosol. Required for normal lysosomal protein degradation in renal proximal tubules. Required for normal degradation of internalized EGFR. Plays a role in the regulation of cell proliferation via its role in EGFR degradation. This is Legumain (LGMN) from Bos taurus (Bovine).